The following is a 269-amino-acid chain: uncharacterized protein (269 aa).

The RPE1 insert domain occupies 152 to 197; that stretch reads RYFSKPAYRNAFKANTIRATTAYKKVFNDPSLGSTYPLEVPLGKMS.

This is an uncharacterized protein from Rickettsia prowazekii (strain Madrid E).